Reading from the N-terminus, the 245-residue chain is uncharacterized protein (245 aa).

The first 18 residues, 1-18, serve as a signal peptide directing secretion; that stretch reads MKSAAILALLAQALAVTA. The tract at residues 21–66 is disordered; that stretch reads VEGDRTPGTRTLDLPNFPGGSVPTRGVEKRADLPPDNGGGNAPDPD. 2 N-linked (GlcNAc...) asparagine glycosylation sites follow: Asn189 and Asn225.

The protein localises to the secreted. This is an uncharacterized protein from Arthroderma benhamiae (strain ATCC MYA-4681 / CBS 112371) (Trichophyton mentagrophytes).